The following is a 389-amino-acid chain: Tyrosinase-like protein phomQ1 (389 aa).

The helical transmembrane segment at 53-73 (TIIVVSVITFAAIIGCWVFLS) threads the bilayer. Positions 141 and 150 each coordinate Cu cation. Asn220 carries an N-linked (GlcNAc...) asparagine glycan. The Cu cation site is built by His290 and His316.

Belongs to the tyrosinase family. The cofactor is Cu(2+).

It is found in the membrane. It functions in the pathway mycotoxin biosynthesis. Its function is as follows. Tyrosinase-like protein; part of the gene cluster that mediates the biosynthesis of the phomopsins, a group of hexapeptide mycotoxins which infects lupins and causes lupinosis disease in livestock. Within the pathway, phomQ1 functions as a halogenase, converting. The pathway starts with the processing of the precursor phomA by several endopeptidases including kexin proteases as well as the cluster-specific S41 family peptidase phomP1 and the oligopeptidase phomG to produce 10 identical copies of the hexapeptide Tyr-Val-Ile-Pro-Ile-Asp. After being excised from the precursor peptide, the core peptides are cyclized and modified post-translationally by enzymes encoded within the gene cluster. The timing and order of proteolysis of the phomA precursor and PTMs are still unknown. Two tyrosinase-like enzymes, phomQ1 and phomQ2, catalyze the chlorination and hydroxylation of Tyr, respectively. PhomYb, is proposed to be involved in the construction of the macrocyclic structure. The other 4 ustYa family proteins may be involved in PTMs that generate the unique structure of phomopsin A. PhomYa is required for the hydroxylation of C-beta of Tyr. PhomYc, phomYd, and phomYe are responsible for the biosynthesis of 2,3-dehydroisoleucine (dIle), 2,3-dehydroaspartic acid (dAsp), and 3,4-dehydroproline (dPro), respectively. While dIle formation by phomYc is indispensable for the installation of dAsp by phomYd, the order of the other PTMs have not been elucidated yet. Most of the biosynthetic enzymes likely have broad substrate specificity, and thus, there might be a metabolic grid from a precursor to phomopsin A. The enzyme(s) responsible for the biosynthesis of 3,4-dehydrovaline (dVal) have also not been identified yet. Finally, phomM acts as an S-adenosylmethionine-dependent alpha-N-methyltransferase that catalyzes two successive N-methylation reactions, converting N-desmethyl-phomopsin A to phomopsin A and phomopsin A further to an N,N-dimethylated congener called phomopsin E. The protein is Tyrosinase-like protein phomQ1 of Diaporthe leptostromiformis (Lupinosis disease fungus).